We begin with the raw amino-acid sequence, 612 residues long: Cyclin-dependent kinase G1 (612 aa).

Positions 26–54 (SRDVYVRQSGRDDERRQIKRPSDHDLRRN) are enriched in basic and acidic residues. 2 disordered regions span residues 26–60 (SRDV…RHRS) and 239–278 (CYSS…EDQD). The region spanning 297–593 (FQKLNKINEG…VEDALNHGWF (297 aa)) is the Protein kinase domain. ATP-binding positions include 303 to 311 (INEGTYGIV) and K326. At Y308 the chain carries Phosphotyrosine. The Proton acceptor role is filled by D426. Residue S453 is modified to Phosphoserine. The residue at position 459 (T459) is a Phosphothreonine.

This sequence belongs to the protein kinase superfamily. Ser/Thr protein kinase family. Forms a complex with CYCL1-1. Associated with the spliceosome. Interacts with RS2Z33. In terms of tissue distribution, expressed in leaves and inflorescences. Lower levels of expression in roots and stems.

The protein resides in the nucleus speckle. The catalysed reaction is L-seryl-[protein] + ATP = O-phospho-L-seryl-[protein] + ADP + H(+). It carries out the reaction L-threonyl-[protein] + ATP = O-phospho-L-threonyl-[protein] + ADP + H(+). Its function is as follows. Cyclin-dependent kinase involved in pre-mRNA splicing. Required for the correct splicing of the sixth intron of CALS5 pre-mRNA. May stabilize the binding of U1 snRNP to this rare type of intron with a GC 5'SS. Involved in chromosome pairing and is required for the completion of synapsis in male meiocytes at high ambient temperatures. The polypeptide is Cyclin-dependent kinase G1 (CDKG1) (Arabidopsis thaliana (Mouse-ear cress)).